A 225-amino-acid polypeptide reads, in one-letter code: MHIHDWPTNERPREKLLARGATALSDAELLAIFVGSGLRGQDAVQTARDLLHRHGPLRPLLDRPAKALERLPGLGPASACKLAAALELAHRHLMSALERGEALSDPPSVGRYFSQRLRARAYEVFAVLFLDNRHRAIAFEELFTGTIDGADIHPREVVRRALLHNAAAVIVGHNHPSGNPEPSKADRAVTKRLLDSLELVDIRLLDHFVIGDGRPVSLAERGWLE.

The 123-residue stretch at 102–224 folds into the MPN domain; the sequence is ALSDPPSVGR…PVSLAERGWL (123 aa). H173, H175, and D186 together coordinate Zn(2+). Positions 173-186 match the JAMM motif motif; it reads HNHPSGNPEPSKAD.

This sequence belongs to the UPF0758 family.

The chain is UPF0758 protein XOO0495 from Xanthomonas oryzae pv. oryzae (strain KACC10331 / KXO85).